We begin with the raw amino-acid sequence, 162 residues long: Regulatory protein RecX (162 aa).

It belongs to the RecX family.

Its subcellular location is the cytoplasm. In terms of biological role, modulates RecA activity. This Xanthomonas oryzae pv. oryzae (strain PXO99A) protein is Regulatory protein RecX.